The sequence spans 513 residues: GMP synthase [glutamine-hydrolyzing] (513 aa).

The Glutamine amidotransferase type-1 domain occupies 9 to 198; it reads LILVLDFGSQ…IREICKCTGE (190 aa). Cysteine 86 acts as the Nucleophile in catalysis. Catalysis depends on residues histidine 172 and glutamate 174. Residues 199–388 form the GMPS ATP-PPase domain; the sequence is WTMENFIEIE…LGIPEHLVWR (190 aa). 226–232 provides a ligand contact to ATP; the sequence is SGGVDSS.

In terms of assembly, homodimer.

The enzyme catalyses XMP + L-glutamine + ATP + H2O = GMP + L-glutamate + AMP + diphosphate + 2 H(+). The protein operates within purine metabolism; GMP biosynthesis; GMP from XMP (L-Gln route): step 1/1. Its function is as follows. Catalyzes the synthesis of GMP from XMP. This chain is GMP synthase [glutamine-hydrolyzing], found in Macrococcus caseolyticus (strain JCSC5402) (Macrococcoides caseolyticum).